The following is a 63-amino-acid chain: Prokaryotic ubiquitin-like protein Pup (63 aa).

The tract at residues 1–28 is disordered; that stretch reads MSDRQTQIPAGGGREDDHDDQVQSAGQV. The tract at residues 19-57 is ARC ATPase binding; the sequence is DDQVQSAGQVQVNTEGVDDLLDEIDGLLENNAEEFVRSY. Residue glutamate 63 forms an Isoglutamyl lysine isopeptide (Glu-Lys) (interchain with K-? in acceptor proteins) linkage.

This sequence belongs to the prokaryotic ubiquitin-like protein family. In terms of assembly, strongly interacts with the proteasome-associated ATPase ARC through a hydrophobic interface; the interacting region of Pup lies in its C-terminal half. There is one Pup binding site per ARC hexamer ring.

It functions in the pathway protein degradation; proteasomal Pup-dependent pathway. Protein modifier that is covalently attached to lysine residues of substrate proteins, thereby targeting them for proteasomal degradation. The tagging system is termed pupylation. This chain is Prokaryotic ubiquitin-like protein Pup, found in Corynebacterium efficiens (strain DSM 44549 / YS-314 / AJ 12310 / JCM 11189 / NBRC 100395).